The primary structure comprises 261 residues: MPQNEYIEQHIKQHGRRLDHEERKRKREAREAHKISERAQKLTGWKGKQFAKKRYSEKVAMRKKIKAHEQSKVKGGSKPLDESGDALPTYLLDREQTNTAKAISSSIKQKRLEKADKFSVPLPKVRGISEEEMFKVVKTGKSKTKSWKRMITKHTFVGEGFTRRPVKMERIIRPSALRQKKANVTHPELGVTVFLPILSVKKNPQSPMYTQLGVLTKGTIIEVNVSELGMVTSGGKVVWGKYAQITNEPDRDGCVNAVLLV.

Residues 1–35 (MPQNEYIEQHIKQHGRRLDHEERKRKREAREAHKI) form a disordered region. Over residues 7 to 35 (IEQHIKQHGRRLDHEERKRKREAREAHKI) the composition is skewed to basic and acidic residues. 2 consecutive short sequence motifs (nuclear localization signal) follow at residues 15–22 (GRRLDHEE) and 51–58 (AKKRYSEK). The interval 61 to 84 (MRKKIKAHEQSKVKGGSKPLDESG) is disordered.

It belongs to the eukaryotic ribosomal protein eS8 family. Ribosome biogenesis protein NSA2 subfamily. In terms of assembly, component of the pre-66S ribosomal particle. Interacts with NOP7 and RRP1. Interacts with RSA4 (via WD repeats).

Its subcellular location is the nucleus. The protein localises to the nucleolus. Functionally, involved in the biogenesis of the 60S ribosomal subunit. May play a part in the quality control of pre-60S particles. This chain is Ribosome biogenesis protein NSA2 (NSA2), found in Vanderwaltozyma polyspora (strain ATCC 22028 / DSM 70294 / BCRC 21397 / CBS 2163 / NBRC 10782 / NRRL Y-8283 / UCD 57-17) (Kluyveromyces polysporus).